The sequence spans 252 residues: Probable endonuclease 4 (252 aa).

The Zn(2+) site is built by histidine 56, histidine 96, glutamate 129, aspartate 162, histidine 165, histidine 191, aspartate 204, histidine 206, and glutamate 233.

The protein belongs to the AP endonuclease 2 family. Requires Zn(2+) as cofactor.

It catalyses the reaction Endonucleolytic cleavage to 5'-phosphooligonucleotide end-products.. In terms of biological role, endonuclease IV plays a role in DNA repair. It cleaves phosphodiester bonds at apurinic or apyrimidinic (AP) sites, generating a 3'-hydroxyl group and a 5'-terminal sugar phosphate. In Mycobacterium marinum (strain ATCC BAA-535 / M), this protein is Probable endonuclease 4.